The sequence spans 121 residues: Probable V-type proton ATPase subunit F (121 aa).

It belongs to the V-ATPase F subunit family. V-ATPase is a heteromultimeric enzyme made up of two complexes: the ATP-hydrolytic V1 complex and the proton translocation V0 complex. The V1 complex consists of three catalytic AB heterodimers that form a heterohexamer, three peripheral stalks each consisting of EG heterodimers, one central rotor including subunits D and F, and the regulatory subunits C and H. The proton translocation complex V0 consists of the proton transport subunit a, a ring of proteolipid subunits c9c'', rotary subunit d, subunits e and f, and the accessory subunits vah-19/Ac45 and vah-20/PRR.

Subunit of the V1 complex of vacuolar(H+)-ATPase (V-ATPase), a multisubunit enzyme composed of a peripheral complex (V1) that hydrolyzes ATP and a membrane integral complex (V0) that translocates protons. V-ATPase is responsible for acidifying and maintaining the pH of intracellular compartments and in some cell types, is targeted to the plasma membrane, where it is responsible for acidifying the extracellular environment. Required along with other vacuolar ATPase components for the removal of protein aggregates which form in immature oocytes in the distal gonad. This removal occurs as the oocytes mature and move to the proximal gonad, is triggered by the introduction of sperm through mating and occurs before fertilization. The introduction of sperm triggers V-ATPase accumulation in proximal oocytes and induces lysosomal acidification which leads to engulfing of protein aggregates by lysosomes and subsequent clearance of the aggregates. Lysosomal acidification also leads to changes in mitochondrial morphology and function. Mitochondria in distal immature oocytes are fragmented, produce high levels of reactive oxygen species (ROS) and have high membrane potential, indicative of metabolic inactivity. In contrast, mitochondria in proximal mature oocytes are tubular with lower ROS levels and membrane potential, indicative of an active metabolic state required for aggregate mobilization before clearance. The sequence is that of Probable V-type proton ATPase subunit F from Caenorhabditis elegans.